The primary structure comprises 166 residues: Small ribosomal subunit protein uS5 (166 aa).

The S5 DRBM domain maps to 11-74 (LQEKLIAVNR…EKARRNMINV (64 aa)).

This sequence belongs to the universal ribosomal protein uS5 family. As to quaternary structure, part of the 30S ribosomal subunit. Contacts proteins S4 and S8.

With S4 and S12 plays an important role in translational accuracy. Functionally, located at the back of the 30S subunit body where it stabilizes the conformation of the head with respect to the body. The sequence is that of Small ribosomal subunit protein uS5 from Actinobacillus succinogenes (strain ATCC 55618 / DSM 22257 / CCUG 43843 / 130Z).